The sequence spans 653 residues: Dystrotelin (653 aa).

Residues 223–279 (THPVRCSVCRTFPIIGLRYHCLKCLDFDICELCFLSGLHKNSHEKSHTVMEECVQMS) form a ZZ-type zinc finger. Residues cysteine 228, cysteine 231, cysteine 243, cysteine 246, cysteine 252, cysteine 255, histidine 265, and histidine 269 each contribute to the Zn(2+) site. A coiled-coil region spans residues 384 to 411 (RDSLNTLLRERRLLRKQLHRYKQKLQGT).

Strongly expressed in the nervous and muscular tissues.

It is found in the cell membrane. In Mus musculus (Mouse), this protein is Dystrotelin (Dytn).